The sequence spans 371 residues: DNA replication and repair protein RecF (371 aa).

30-37 (GENAQGKT) is an ATP binding site.

It belongs to the RecF family.

Its subcellular location is the cytoplasm. In terms of biological role, the RecF protein is involved in DNA metabolism; it is required for DNA replication and normal SOS inducibility. RecF binds preferentially to single-stranded, linear DNA. It also seems to bind ATP. In Staphylococcus epidermidis (strain ATCC 12228 / FDA PCI 1200), this protein is DNA replication and repair protein RecF.